A 152-amino-acid chain; its full sequence is Ribosome maturation factor RimP (152 aa).

Belongs to the RimP family.

The protein localises to the cytoplasm. In terms of biological role, required for maturation of 30S ribosomal subunits. The chain is Ribosome maturation factor RimP from Pseudoalteromonas atlantica (strain T6c / ATCC BAA-1087).